The primary structure comprises 465 residues: Methylenetetrahydrofolate--tRNA-(uracil-5-)-methyltransferase TrmFO (465 aa).

An FAD-binding site is contributed by 10 to 15 (GAGLAG).

The protein belongs to the MnmG family. TrmFO subfamily. FAD serves as cofactor.

The protein resides in the cytoplasm. The catalysed reaction is uridine(54) in tRNA + (6R)-5,10-methylene-5,6,7,8-tetrahydrofolate + NADH + H(+) = 5-methyluridine(54) in tRNA + (6S)-5,6,7,8-tetrahydrofolate + NAD(+). The enzyme catalyses uridine(54) in tRNA + (6R)-5,10-methylene-5,6,7,8-tetrahydrofolate + NADPH + H(+) = 5-methyluridine(54) in tRNA + (6S)-5,6,7,8-tetrahydrofolate + NADP(+). Catalyzes the folate-dependent formation of 5-methyl-uridine at position 54 (M-5-U54) in all tRNAs. This is Methylenetetrahydrofolate--tRNA-(uracil-5-)-methyltransferase TrmFO from Deinococcus radiodurans (strain ATCC 13939 / DSM 20539 / JCM 16871 / CCUG 27074 / LMG 4051 / NBRC 15346 / NCIMB 9279 / VKM B-1422 / R1).